Reading from the N-terminus, the 469-residue chain is Glutamate--tRNA ligase (469 aa).

Positions 9-19 (PSPTGFLHVGG) match the 'HIGH' region motif. Zn(2+) is bound by residues Cys-98, Cys-100, Cys-125, and Asp-127. A 'KMSKS' region motif is present at residues 236 to 240 (KLSKR). Residue Lys-239 coordinates ATP.

It belongs to the class-I aminoacyl-tRNA synthetase family. Glutamate--tRNA ligase type 1 subfamily. Monomer. Zn(2+) is required as a cofactor.

Its subcellular location is the cytoplasm. It carries out the reaction tRNA(Glu) + L-glutamate + ATP = L-glutamyl-tRNA(Glu) + AMP + diphosphate. In terms of biological role, catalyzes the attachment of glutamate to tRNA(Glu) in a two-step reaction: glutamate is first activated by ATP to form Glu-AMP and then transferred to the acceptor end of tRNA(Glu). In Shewanella sp. (strain MR-4), this protein is Glutamate--tRNA ligase.